Consider the following 138-residue polypeptide: Small ribosomal subunit protein uS12m (138 aa).

The N-terminal 29 residues, 1–29 (MSWSGLLHGLNTSLTCGPALVPRLWATCS), are a transit peptide targeting the mitochondrion. A disordered region spans residues 36–56 (MHRLGPPKRPPRKLGPTEGRP).

It belongs to the universal ribosomal protein uS12 family. In terms of assembly, component of the mitochondrial small ribosomal subunit (mt-SSU). Mature mammalian 55S mitochondrial ribosomes consist of a small (28S) and a large (39S) subunit. The 28S small subunit contains a 12S ribosomal RNA (12S mt-rRNA) and 30 different proteins. The 39S large subunit contains a 16S rRNA (16S mt-rRNA), a copy of mitochondrial valine transfer RNA (mt-tRNA(Val)), which plays an integral structural role, and 52 different proteins.

It is found in the mitochondrion. This is Small ribosomal subunit protein uS12m (MRPS12) from Homo sapiens (Human).